The following is a 557-amino-acid chain: Ubiquitin C-terminal hydrolase 22 (557 aa).

The UBP-type; degenerate zinc-finger motif lies at 36–130 (FRCFNDARIK…VSKQLFGLGM (95 aa)). Zn(2+)-binding residues include cysteine 56, cysteine 59, cysteine 69, cysteine 72, cysteine 77, histidine 80, histidine 84, and histidine 91. Positions 177 to 531 (RGLNNLGSTC…ECYMLFYAQE (355 aa)) constitute a USP domain. Cysteine 186 (nucleophile) is an active-site residue. The active-site Proton acceptor is the histidine 491.

Belongs to the peptidase C19 family. As to quaternary structure, component of a deubiquitination module (DUB module) formed by ENY2, SGF11, and UBP22 in Arabidopsis. Interacts directly with SGF11, but not with ENY2.

The protein resides in the nucleus. Its subcellular location is the nucleoplasm. The catalysed reaction is Thiol-dependent hydrolysis of ester, thioester, amide, peptide and isopeptide bonds formed by the C-terminal Gly of ubiquitin (a 76-residue protein attached to proteins as an intracellular targeting signal).. Component of a deubiquitination module (DUB module) that specifically deubiquinates monoubiquinated histone H2B (H2Bub). Does not seem to be a component of the TREX-2 complex. Seems to act independently of the SAGA multiprotein complex. The DUB module is responsible for the major H2Bub deubiquitinase activity in Arabidopsis. The protein is Ubiquitin C-terminal hydrolase 22 of Arabidopsis thaliana (Mouse-ear cress).